Reading from the N-terminus, the 399-residue chain is Dual-specificity RNA methyltransferase RlmN (399 aa).

The active-site Proton acceptor is Glu122. Positions Glu128–Leu371 constitute a Radical SAM core domain. An intrachain disulfide couples Cys135 to Cys374. Positions 142, 146, and 149 each coordinate [4Fe-4S] cluster. Residues Gly200–Glu201, Ser232, Ser254–His256, and Asn331 each bind S-adenosyl-L-methionine. Cys374 (S-methylcysteine intermediate) is an active-site residue.

This sequence belongs to the radical SAM superfamily. RlmN family. Requires [4Fe-4S] cluster as cofactor.

Its subcellular location is the cytoplasm. It catalyses the reaction adenosine(2503) in 23S rRNA + 2 reduced [2Fe-2S]-[ferredoxin] + 2 S-adenosyl-L-methionine = 2-methyladenosine(2503) in 23S rRNA + 5'-deoxyadenosine + L-methionine + 2 oxidized [2Fe-2S]-[ferredoxin] + S-adenosyl-L-homocysteine. The catalysed reaction is adenosine(37) in tRNA + 2 reduced [2Fe-2S]-[ferredoxin] + 2 S-adenosyl-L-methionine = 2-methyladenosine(37) in tRNA + 5'-deoxyadenosine + L-methionine + 2 oxidized [2Fe-2S]-[ferredoxin] + S-adenosyl-L-homocysteine. Functionally, specifically methylates position 2 of adenine 2503 in 23S rRNA and position 2 of adenine 37 in tRNAs. m2A2503 modification seems to play a crucial role in the proofreading step occurring at the peptidyl transferase center and thus would serve to optimize ribosomal fidelity. The polypeptide is Dual-specificity RNA methyltransferase RlmN (Rhodopseudomonas palustris (strain HaA2)).